Reading from the N-terminus, the 437-residue chain is Glutamyl-tRNA reductase (437 aa).

Residues 49–52 (TCNR), Ser109, 114–116 (EGQ), and Gln120 each bind substrate. The active-site Nucleophile is Cys50. 198–203 (GAGRMS) contacts NADP(+).

It belongs to the glutamyl-tRNA reductase family. As to quaternary structure, homodimer.

The enzyme catalyses (S)-4-amino-5-oxopentanoate + tRNA(Glu) + NADP(+) = L-glutamyl-tRNA(Glu) + NADPH + H(+). Its pathway is porphyrin-containing compound metabolism; protoporphyrin-IX biosynthesis; 5-aminolevulinate from L-glutamyl-tRNA(Glu): step 1/2. It functions in the pathway porphyrin-containing compound metabolism; chlorophyll biosynthesis. In terms of biological role, catalyzes the NADPH-dependent reduction of glutamyl-tRNA(Glu) to glutamate 1-semialdehyde (GSA). The sequence is that of Glutamyl-tRNA reductase from Synechococcus sp. (strain CC9311).